The sequence spans 59 residues: MKIFSILLVALIICSISICTEAFGLIDVKCFASSECWTACKKVTGSGQGKCQNNQCRCY.

The signal sequence occupies residues 1–22; the sequence is MKIFSILLVALIICSISICTEA. Cystine bridges form between cysteine 30-cysteine 51, cysteine 36-cysteine 56, and cysteine 40-cysteine 58.

This sequence belongs to the short scorpion toxin superfamily. Potassium channel inhibitor family. Alpha-KTx 16 subfamily. In terms of tissue distribution, expressed by the venom gland.

It is found in the secreted. Alpha-KTx 16.2: inhibits large conductance calcium-activated potassium channels (KCa1.1/Slo-beta4 KCNMA1/KCNMB4). It appears to block channel activity by a simple bimolecular inhibition process. Shows a fast association rate and a slow dissociation rate of binding on rat brain synaptosome. Significantly inhibits voltage-dependent sodium current and voltage-dependent delayed rectifier potassium currents. Functionally, significantly inhibits voltage-dependent sodium current (Nav) and voltage-dependent delayed rectifier potassium current. The polypeptide is Potassium channel toxin alpha-KTx 16.2 (Olivierus martensii (Manchurian scorpion)).